Here is a 93-residue protein sequence, read N- to C-terminus: UPF0298 protein LMHCC_0506 (93 aa).

The protein belongs to the UPF0298 family.

It localises to the cytoplasm. The sequence is that of UPF0298 protein LMHCC_0506 from Listeria monocytogenes serotype 4a (strain HCC23).